Reading from the N-terminus, the 263-residue chain is Oxidoreductase UcpA (263 aa).

10–32 (LITGALQGIGEGIARTFARHGAN) provides a ligand contact to NAD(+). Ser141 contacts substrate. Tyr155 functions as the Proton acceptor in the catalytic mechanism.

Belongs to the short-chain dehydrogenases/reductases (SDR) family.

The chain is Oxidoreductase UcpA (ucpA) from Escherichia coli O157:H7.